Reading from the N-terminus, the 258-residue chain is Uroplakin-1a (258 aa).

Residues 1-14 lie on the Cytoplasmic side of the membrane; it reads MASAAAATTEKGSP. Residues 15-35 traverse the membrane as a helical segment; it reads VVVGLLVMGNIIILLSGLALF. Over 36–59 the chain is Extracellular; sequence AETVWVTADQYRIYPLMGVSGKDD. The helical transmembrane segment at 60–86 threads the bilayer; that stretch reads VFAGAWIAIFCGFSFFVVASFGVGAAL. The Cytoplasmic portion of the chain corresponds to 87–91; it reads CRRRS. A helical membrane pass occupies residues 92 to 112; sequence MILTYLILMLIIYIFECASCI. Residues 113 to 230 are Extracellular-facing; that stretch reads TSYTHRDYMV…HIGHAIDSYT (118 aa). Residue Asn170 is glycosylated (N-linked (GlcNAc...) asparagine). The helical transmembrane segment at 231–252 threads the bilayer; sequence WGISWFGFAILMWTLPVMLIAM. The Cytoplasmic portion of the chain corresponds to 253–258; it reads YFYTTL.

The protein belongs to the tetraspanin (TM4SF) family. As to quaternary structure, homodimer; disulfide-linked. Interacts with uroplakin-2 (UPK2). The N-terminus is blocked. Post-translationally, N-glycosylated with high-mannose oligosaccharides. In terms of tissue distribution, bladder epithelium.

The protein resides in the membrane. Functionally, component of the asymmetric unit membrane (AUM); a highly specialized biomembrane elaborated by terminally differentiated urothelial cells. May play an important role in normal bladder epithelial physiology, possibly in regulating membrane permeability of superficial umbrella cells or in stabilizing the apical membrane through AUM/cytoskeletal interactions. This Bos taurus (Bovine) protein is Uroplakin-1a (UPK1A).